The following is a 121-amino-acid chain: uncharacterized protein (121 aa).

The protein localises to the mitochondrion. This is an uncharacterized protein from Arabidopsis thaliana (Mouse-ear cress).